Here is a 131-residue protein sequence, read N- to C-terminus: Small ribosomal subunit protein uS8 (131 aa).

Belongs to the universal ribosomal protein uS8 family. Part of the 30S ribosomal subunit. Contacts proteins S5 and S12.

In terms of biological role, one of the primary rRNA binding proteins, it binds directly to 16S rRNA central domain where it helps coordinate assembly of the platform of the 30S subunit. This chain is Small ribosomal subunit protein uS8, found in Alkalilimnicola ehrlichii (strain ATCC BAA-1101 / DSM 17681 / MLHE-1).